Here is a 384-residue protein sequence, read N- to C-terminus: Succinate--CoA ligase [ADP-forming] subunit beta (384 aa).

The 234-residue stretch at 9–242 (KAILAQYKVP…LNEEDPLEVE (234 aa)) folds into the ATP-grasp domain. ATP is bound by residues Lys-45, 52–54 (GRG), Glu-98, Leu-101, and Glu-106. The Mg(2+) site is built by Asn-197 and Asp-211. Substrate-binding positions include Asn-262 and 319–321 (GIL).

It belongs to the succinate/malate CoA ligase beta subunit family. Heterotetramer of two alpha and two beta subunits. Requires Mg(2+) as cofactor.

The catalysed reaction is succinate + ATP + CoA = succinyl-CoA + ADP + phosphate. It catalyses the reaction GTP + succinate + CoA = succinyl-CoA + GDP + phosphate. It participates in carbohydrate metabolism; tricarboxylic acid cycle; succinate from succinyl-CoA (ligase route): step 1/1. In terms of biological role, succinyl-CoA synthetase functions in the citric acid cycle (TCA), coupling the hydrolysis of succinyl-CoA to the synthesis of either ATP or GTP and thus represents the only step of substrate-level phosphorylation in the TCA. The beta subunit provides nucleotide specificity of the enzyme and binds the substrate succinate, while the binding sites for coenzyme A and phosphate are found in the alpha subunit. This Solibacter usitatus (strain Ellin6076) protein is Succinate--CoA ligase [ADP-forming] subunit beta.